Reading from the N-terminus, the 165-residue chain is uncharacterized protein (165 aa).

Residues 53–123 are disordered; sequence CSEKTGSAPN…PAPSSGRQGG (71 aa). Over residues 58 to 71 the composition is skewed to low complexity; it reads GSAPNPGSSAPAPA.

This is an uncharacterized protein from Treponema pallidum (strain Nichols).